We begin with the raw amino-acid sequence, 739 residues long: MDEADARAEFEALQTKIEKADHDYHQKDAPTLSDADYDRLKRRYLALADAFPILAKDGTRVASVGAPAASGFGKVTHAQRMMSLGNAFEDQDVEDFAVGLRRYLGLSSEAPLAFTAEPKIDGLSLSLRYEAGKLVQAATRGDGAVGENVTENARTISDIPQEISGAPEVLEVRGEVYMSHADFEALNARHAETGGKIFANPRNAAAGSLRQLDAEITRARPLRFFAYSWGELSEPLAETQIDAIERLASLGFQTNPLTRCCEQISELLAHYHAIEEQRADLGYDIDGVVYKVNDLSLQERLGFRSTTPRWAIAHKFPAELAWTHLEGIDIQVGRTGALSPVARLHPVTVGGVVVSNATLHNEDYIAGLDSKGAPIRGGKDIRVGDWVQIYRAGDVIPKVADVDLSRRPEGTERYAFPTRCPRCDSPAVREEGDAVRRCSGGLICPAQAVEKLKHFVSRAAFDIEGLGAKQVEQFHSDGWVKEPADIFELQQRYGSGLQQLKNREGWGEKSASALFAAIEDKRRIEFARLIFGLGIRHVGEVAAKDLALHFRTWSALAEAADLARAAALAHRAADEAEIVERQEAQASARRAKISEARNAAVATCAVAPDSQAAWDDLISVDGLGPTVALSLSDAFANPEERAAFDRLIAHLEIIEPDAPADDSPVAGKTVVFTGTLEKMTRAEAKARAEALGAKVSGSVSKKTDILVAGPGAGSKAAKAAELGIQTLDEDGWLDLIGQA.

NAD(+) contacts are provided by residues 34 to 38 (DADYD), 83 to 84 (SL), and Glu117. Lys119 serves as the catalytic N6-AMP-lysine intermediate. 4 residues coordinate NAD(+): Arg140, Glu175, Lys291, and Lys315. Positions 420, 423, 438, and 444 each coordinate Zn(2+). The BRCT domain maps to 660-739 (ADDSPVAGKT…DGWLDLIGQA (80 aa)).

This sequence belongs to the NAD-dependent DNA ligase family. LigA subfamily. The cofactor is Mg(2+). It depends on Mn(2+) as a cofactor.

The enzyme catalyses NAD(+) + (deoxyribonucleotide)n-3'-hydroxyl + 5'-phospho-(deoxyribonucleotide)m = (deoxyribonucleotide)n+m + AMP + beta-nicotinamide D-nucleotide.. In terms of biological role, DNA ligase that catalyzes the formation of phosphodiester linkages between 5'-phosphoryl and 3'-hydroxyl groups in double-stranded DNA using NAD as a coenzyme and as the energy source for the reaction. It is essential for DNA replication and repair of damaged DNA. The sequence is that of DNA ligase from Ruegeria sp. (strain TM1040) (Silicibacter sp.).